Consider the following 569-residue polypeptide: Sulfite reductase [NADPH] hemoprotein beta-component (569 aa).

[4Fe-4S] cluster-binding residues include Cys433, Cys439, Cys478, and Cys482. Cys482 is a siroheme binding site.

Belongs to the nitrite and sulfite reductase 4Fe-4S domain family. As to quaternary structure, alpha(8)-beta(8). The alpha component is a flavoprotein, the beta component is a hemoprotein. Siroheme is required as a cofactor. It depends on [4Fe-4S] cluster as a cofactor.

The enzyme catalyses hydrogen sulfide + 3 NADP(+) + 3 H2O = sulfite + 3 NADPH + 4 H(+). Its pathway is sulfur metabolism; hydrogen sulfide biosynthesis; hydrogen sulfide from sulfite (NADPH route): step 1/1. In terms of biological role, component of the sulfite reductase complex that catalyzes the 6-electron reduction of sulfite to sulfide. This is one of several activities required for the biosynthesis of L-cysteine from sulfate. This is Sulfite reductase [NADPH] hemoprotein beta-component from Shewanella sediminis (strain HAW-EB3).